A 115-amino-acid chain; its full sequence is NAD(P)H-quinone oxidoreductase subunit M (115 aa).

It belongs to the complex I NdhM subunit family. NDH-1 can be composed of about 15 different subunits; different subcomplexes with different compositions have been identified which probably have different functions.

Its subcellular location is the cellular thylakoid membrane. The catalysed reaction is a plastoquinone + NADH + (n+1) H(+)(in) = a plastoquinol + NAD(+) + n H(+)(out). It carries out the reaction a plastoquinone + NADPH + (n+1) H(+)(in) = a plastoquinol + NADP(+) + n H(+)(out). Its function is as follows. NDH-1 shuttles electrons from an unknown electron donor, via FMN and iron-sulfur (Fe-S) centers, to quinones in the respiratory and/or the photosynthetic chain. The immediate electron acceptor for the enzyme in this species is believed to be plastoquinone. Couples the redox reaction to proton translocation, and thus conserves the redox energy in a proton gradient. Cyanobacterial NDH-1 also plays a role in inorganic carbon-concentration. The chain is NAD(P)H-quinone oxidoreductase subunit M from Synechococcus sp. (strain CC9605).